The following is a 164-amino-acid chain: B-phycoerythrin alpha chain (164 aa).

Cysteine 82 and cysteine 139 together coordinate (2R,3E)-phycoerythrobilin.

Belongs to the phycobiliprotein family. As to quaternary structure, heteromer of 6 alpha, 6 beta and one gamma chain. Contains two covalently linked bilin chromophores.

The protein resides in the plastid. Its subcellular location is the chloroplast thylakoid membrane. Its function is as follows. Light-harvesting photosynthetic bile pigment-protein from the phycobiliprotein complex. This is B-phycoerythrin alpha chain (cpeA) from Porphyridium purpureum (Red alga).